Consider the following 233-residue polypeptide: Homeobox protein not2 (233 aa).

Residues Leu135–Ser194 constitute a DNA-binding region (homeobox). Residues Ser212–Leu233 form a disordered region. The span at Arg220–Leu233 shows a compositional bias: acidic residues.

As to expression, localized to the dorsal lip of the blastopore (Spemann organizer) during early gastrulation, after which expression continues in tissues derived from the organizer. Expressed in the notochord during mid-gastrulation, the chordoneural hinge, notochord and ventral spinal cord of the tailbud at stage 22, and finally the tip of the tail in the tadpole (stage 35).

The protein resides in the nucleus. Its function is as follows. Transcriptional repressor. Plays a fundamental role in notochord formation, acting within the mesodermal region. Acts downstream of gsc and upstream of chrd and foxa4-A/pintallavis. The protein is Homeobox protein not2 of Xenopus laevis (African clawed frog).